Reading from the N-terminus, the 211-residue chain is Peroxiredoxin (211 aa).

One can recognise a Thioredoxin domain in the interval 2–156 (PLIGDKFPEM…IVRMIRAFRV (155 aa)). The active-site Cysteine sulfenic acid (-SOH) intermediate is the Cys44. Arg119 provides a ligand contact to substrate. A disulfide bridge links Cys198 with Cys204.

It belongs to the peroxiredoxin family. Prx6 subfamily. In terms of assembly, homodecamer. Pentamer of dimers that assemble into a ring structure.

Its subcellular location is the cytoplasm. The catalysed reaction is a hydroperoxide + [thioredoxin]-dithiol = an alcohol + [thioredoxin]-disulfide + H2O. In terms of biological role, thiol-specific peroxidase that catalyzes the reduction of hydrogen peroxide and organic hydroperoxides to water and alcohols, respectively. Plays a role in cell protection against oxidative stress by detoxifying peroxides. The chain is Peroxiredoxin from Methanothermobacter marburgensis (strain ATCC BAA-927 / DSM 2133 / JCM 14651 / NBRC 100331 / OCM 82 / Marburg) (Methanobacterium thermoautotrophicum).